Here is a 195-residue protein sequence, read N- to C-terminus: Glycerol-3-phosphate acyltransferase (195 aa).

Transmembrane regions (helical) follow at residues 2 to 22 (LWIF…GLFI), 52 to 72 (YGVA…LMAY), 78 to 98 (WIFI…SIFM), 112 to 132 (VFLA…LAVI), and 145 to 165 (FAVA…VPLA).

It belongs to the PlsY family. As to quaternary structure, probably interacts with PlsX.

It localises to the cell inner membrane. The enzyme catalyses an acyl phosphate + sn-glycerol 3-phosphate = a 1-acyl-sn-glycero-3-phosphate + phosphate. The protein operates within lipid metabolism; phospholipid metabolism. Functionally, catalyzes the transfer of an acyl group from acyl-phosphate (acyl-PO(4)) to glycerol-3-phosphate (G3P) to form lysophosphatidic acid (LPA). This enzyme utilizes acyl-phosphate as fatty acyl donor, but not acyl-CoA or acyl-ACP. The polypeptide is Glycerol-3-phosphate acyltransferase (Maridesulfovibrio salexigens (strain ATCC 14822 / DSM 2638 / NCIMB 8403 / VKM B-1763) (Desulfovibrio salexigens)).